We begin with the raw amino-acid sequence, 521 residues long: Glutamyl-tRNA(Gln) amidotransferase subunit A (521 aa).

Catalysis depends on charge relay system residues K79 and S187. S211 (acyl-ester intermediate) is an active-site residue.

Belongs to the amidase family. GatA subfamily. As to quaternary structure, heterotrimer of A, B and C subunits.

The catalysed reaction is L-glutamyl-tRNA(Gln) + L-glutamine + ATP + H2O = L-glutaminyl-tRNA(Gln) + L-glutamate + ADP + phosphate + H(+). Its function is as follows. Allows the formation of correctly charged Gln-tRNA(Gln) through the transamidation of misacylated Glu-tRNA(Gln) in organisms which lack glutaminyl-tRNA synthetase. The reaction takes place in the presence of glutamine and ATP through an activated gamma-phospho-Glu-tRNA(Gln). The sequence is that of Glutamyl-tRNA(Gln) amidotransferase subunit A from Mesorhizobium japonicum (strain LMG 29417 / CECT 9101 / MAFF 303099) (Mesorhizobium loti (strain MAFF 303099)).